Consider the following 472-residue polypeptide: F-box protein At3g03040 (472 aa).

The region spanning 1–49 (MDLLSSLPDEVRCLILSFLTTKESASTSVLSKKWRNLFALVPNLDFDDS) is the F-box domain.

The chain is F-box protein At3g03040 from Arabidopsis thaliana (Mouse-ear cress).